A 267-amino-acid polypeptide reads, in one-letter code: MTLDVWQHIRQEAKELAENEPMLASFFHSTILKHQNLGGALSYLLANKLANPIMPAISLREIIEEAYQSNPSIIDCAACDIQAVRHRDPAVELWSTPLLYLKGFHAIQSYRITHYLWNQNRKSLALYLQNQISVAFDVDIHPAAKIGHGIMFDHATGIVVGETSVIENDVSILQGVTLGGTGKESGDRHPKVREGVMIGAGAKILGNIEVGKYAKIGANSVVLNPVPEYATAAGVPARIVSQDKAAKPAFDMNQYFIGIDDGMNLNI.

The protein belongs to the transferase hexapeptide repeat family.

The protein localises to the cytoplasm. The catalysed reaction is L-serine + acetyl-CoA = O-acetyl-L-serine + CoA. The protein operates within amino-acid biosynthesis; L-cysteine biosynthesis; L-cysteine from L-serine: step 1/2. This chain is Serine acetyltransferase (cysE), found in Haemophilus influenzae (strain ATCC 51907 / DSM 11121 / KW20 / Rd).